A 554-amino-acid chain; its full sequence is Oxygen-dependent choline dehydrogenase (554 aa).

An FAD-binding site is contributed by 4-33 (DYIIIGAGSAGNVLATRLTEDPNTTVLLLE). H473 acts as the Proton acceptor in catalysis.

Belongs to the GMC oxidoreductase family. FAD is required as a cofactor.

The enzyme catalyses choline + A = betaine aldehyde + AH2. It carries out the reaction betaine aldehyde + NAD(+) + H2O = glycine betaine + NADH + 2 H(+). It participates in amine and polyamine biosynthesis; betaine biosynthesis via choline pathway; betaine aldehyde from choline (cytochrome c reductase route): step 1/1. Its function is as follows. Involved in the biosynthesis of the osmoprotectant glycine betaine. Catalyzes the oxidation of choline to betaine aldehyde and betaine aldehyde to glycine betaine at the same rate. The polypeptide is Oxygen-dependent choline dehydrogenase (Klebsiella pneumoniae subsp. pneumoniae (strain ATCC 700721 / MGH 78578)).